The sequence spans 336 residues: Oxaloacetate decarboxylase (336 aa).

Residues 10–258 enclose the Pyruvate carboxyltransferase domain; the sequence is PIVLDTTVRD…LAAVDLDRIF (249 aa). Mn(2+) contacts are provided by aspartate 19, histidine 197, and histidine 199.

This sequence belongs to the 4-hydroxy-2-oxovalerate aldolase family. As to quaternary structure, homodimer. The cofactor is a divalent metal cation.

It catalyses the reaction oxaloacetate + H(+) = pyruvate + CO2. Activity is abolished upon incubation with Chelex and EDTA. Its function is as follows. Exhibits oxaloacetate decarboxylase activity. Lacks any detectable aldolase activity with 4-hydroxy-2-oxopentanoate (HOPA), 4-hydroxy-2-oxohexanoate (HOHA) or other 4-hydroxy-2-oxoacids. This Mycobacterium tuberculosis (strain ATCC 25618 / H37Rv) protein is Oxaloacetate decarboxylase.